The primary structure comprises 288 residues: Syntaxin-1A (288 aa).

Over 1–265 the chain is Cytoplasmic; sequence MKDRTQELRT…KYQSKARRKK (265 aa). Residues serine 14, serine 64, and serine 95 each carry the phosphoserine modification. The stretch at 68–109 forms a coiled coil; the sequence is DEKTKEELEELMSDIKKTANKVRSKLKSIEQSIEQEEGLNRS. A Phosphoserine; by DAPK1 modification is found at serine 188. One can recognise a t-SNARE coiled-coil homology domain in the interval 192–254; that stretch reads LSEIETRHSE…ERAVSDTKKA (63 aa). Residues lysine 252, lysine 253, and lysine 256 each participate in a glycyl lysine isopeptide (Lys-Gly) (interchain with G-Cter in SUMO) cross-link. A helical; Anchor for type IV membrane protein transmembrane segment spans residues 266–286; sequence IMIIICCVILGIVIASTVGGI. The Extracellular portion of the chain corresponds to 287-288; the sequence is FA.

The protein belongs to the syntaxin family. As to quaternary structure, part of the SNARE core complex containing SNAP25, VAMP2 and STX1A; this complex constitutes the basic catalytic machinery of the complex neurotransmitter release apparatus. The SNARE complex interacts with CPLX1. Interacts with STXBP1. The interaction with STXBP1 promotes assembly of the SNARE complex. Interacts (via C-terminus) with KCNB1 (via C-terminus); the interaction increases in a calcium-dependent manner and induces a pore-independent enhancement of exocytosis in neuroendocrine cells, chromaffin cells, pancreatic beta cells and from the soma of dorsal root ganglia (DRG) neurons. Interacts with SYTL4. Interacts with STXBP6. Interacts with PLCL1 (via C2 domain). Interacts with OTOF. Interacts with LGI3. Interacts (via the H3 domain) with SLC6A4 (via the N-terminus); this interaction regulates SLC4A6 channel conductance in thalamocortical neurons. Interacts with SYT6 and SYT8; the interaction is Ca(2+)-dependent. Interacts with VAMP8. Interacts with SNAP23. Interacts with VAPA and SYBU. Interacts with PRRT2. Interacts with SEPT8. Interacts with STXBP5L. Interacts with synaptotagmin-1/SYT1. Interacts with SEPTIN5; in the cerebellar cortex. Interacts with SEPTIN4; in the striatum. Post-translationally, phosphorylated by CK2. Phosphorylation at Ser-188 by DAPK1 significantly decreases its interaction with STXBP1. In terms of processing, sumoylated, sumoylation is required for regulation of synaptic vesicle endocytosis. Highly expressed in embryonic spinal cord and ganglia and in adult cerebellum and cerebral cortex. In terms of tissue distribution, expressed in heart, liver, fat, skeletal muscle, kidney and brain.

It is found in the cytoplasmic vesicle. It localises to the secretory vesicle. The protein localises to the synaptic vesicle membrane. The protein resides in the synapse. Its subcellular location is the synaptosome. It is found in the cell membrane. It localises to the secreted. Plays an essential role in hormone and neurotransmitter calcium-dependent exocytosis and endocytosis. Part of the SNARE (Soluble NSF Attachment Receptor) complex composed of SNAP25, STX1A and VAMP2 which mediates the fusion of synaptic vesicles with the presynaptic plasma membrane. STX1A and SNAP25 are localized on the plasma membrane while VAMP2 resides in synaptic vesicles. The pairing of the three SNAREs from the N-terminal SNARE motifs to the C-terminal anchors leads to the formation of the SNARE complex, which brings membranes into close proximity and results in final fusion. Participates in the calcium-dependent regulation of acrosomal exocytosis in sperm. Also plays an important role in the exocytosis of hormones such as insulin or glucagon-like peptide 1 (GLP-1). The polypeptide is Syntaxin-1A (STX1A) (Homo sapiens (Human)).